A 389-amino-acid chain; its full sequence is Phospho-N-acetylmuramoyl-pentapeptide-transferase (389 aa).

Helical transmembrane passes span 25–45, 73–93, 97–117, 134–154, 190–210, 222–242, 258–278, 286–306, 311–331, and 366–386; these read RAVM…PWVI, TMGG…WADL, FIWI…VDDY, FFWQ…SVSE, VSYP…IVGS, GLVI…AYVM, GAGE…AFLW, VFMG…IAVI, IVLF…MLQV, and QVVV…LSSL.

It belongs to the glycosyltransferase 4 family. MraY subfamily. Requires Mg(2+) as cofactor.

Its subcellular location is the cell inner membrane. The enzyme catalyses UDP-N-acetyl-alpha-D-muramoyl-L-alanyl-gamma-D-glutamyl-meso-2,6-diaminopimeloyl-D-alanyl-D-alanine + di-trans,octa-cis-undecaprenyl phosphate = di-trans,octa-cis-undecaprenyl diphospho-N-acetyl-alpha-D-muramoyl-L-alanyl-D-glutamyl-meso-2,6-diaminopimeloyl-D-alanyl-D-alanine + UMP. It functions in the pathway cell wall biogenesis; peptidoglycan biosynthesis. Functionally, catalyzes the initial step of the lipid cycle reactions in the biosynthesis of the cell wall peptidoglycan: transfers peptidoglycan precursor phospho-MurNAc-pentapeptide from UDP-MurNAc-pentapeptide onto the lipid carrier undecaprenyl phosphate, yielding undecaprenyl-pyrophosphoryl-MurNAc-pentapeptide, known as lipid I. In Polynucleobacter necessarius subsp. necessarius (strain STIR1), this protein is Phospho-N-acetylmuramoyl-pentapeptide-transferase.